A 461-amino-acid chain; its full sequence is Coronin-1A (461 aa).

Ser2 carries the post-translational modification N-acetylserine. Ser2 bears the Phosphoserine; by PKC mark. WD repeat units lie at residues 13–63, 73–110, 123–160, 164–204, 207–251, 258–296, and 302–349; these read HVFG…LVLP, NVPL…MVWE, PVIT…LVWD, GAAV…RVIE, KGTV…ALWD, PLSL…RYFE, and PFLH…EPIA. Residues 403 to 418 show a composition bias toward basic and acidic residues; it reads ELRVNRGLDSARRRAT. Residues 403-434 are disordered; sequence ELRVNRGLDSARRRATPEPSGTPSSDTVSRLE. A Phosphoserine; by PKC modification is found at Ser412. Thr418 is subject to Phosphothreonine. Polar residues predominate over residues 421 to 430; sequence PSGTPSSDTV. Ser422 carries the post-translational modification Phosphoserine. A coiled-coil region spans residues 424 to 461; sequence TPSSDTVSRLEEDVRNLNAIVQKLQERLDRLEETVQAK.

Belongs to the WD repeat coronin family. In terms of assembly, binds actin. In terms of processing, phosphorylation at Ser-412 by PKC strongly down-regulates the association with actin. Polyubiquitinated by RNF128 with 'Lys-48'-linked chains, leading to proteasomal degradation. In terms of tissue distribution, expressed in spleen, lymph nodes, thymus, brain and at very lower levels in lung. Also expressed in cells of the lymphoid/myeloid lineage. Not expressed in Kuffper cells.

The protein resides in the cytoplasm. It is found in the cytoskeleton. The protein localises to the cell cortex. Its subcellular location is the cytoplasmic vesicle. It localises to the phagosome membrane. May be a crucial component of the cytoskeleton of highly motile cells, functioning both in the invagination of large pieces of plasma membrane, as well as in forming protrusions of the plasma membrane involved in cell locomotion. In mycobacteria-infected cells, its retention on the phagosomal membrane prevents fusion between phagosomes and lysosomes. The chain is Coronin-1A (Coro1a) from Mus musculus (Mouse).